The primary structure comprises 315 residues: Methionyl-tRNA formyltransferase (315 aa).

Residue 113–116 (SILP) participates in (6S)-5,6,7,8-tetrahydrofolate binding.

The protein belongs to the Fmt family.

It catalyses the reaction L-methionyl-tRNA(fMet) + (6R)-10-formyltetrahydrofolate = N-formyl-L-methionyl-tRNA(fMet) + (6S)-5,6,7,8-tetrahydrofolate + H(+). Functionally, attaches a formyl group to the free amino group of methionyl-tRNA(fMet). The formyl group appears to play a dual role in the initiator identity of N-formylmethionyl-tRNA by promoting its recognition by IF2 and preventing the misappropriation of this tRNA by the elongation apparatus. This chain is Methionyl-tRNA formyltransferase, found in Vibrio cholerae serotype O1 (strain ATCC 39541 / Classical Ogawa 395 / O395).